The primary structure comprises 224 residues: Phosphoglycolate phosphatase (224 aa).

Asp11 serves as the catalytic Nucleophile. Asp11, Asp13, and Asp177 together coordinate Mg(2+).

The protein belongs to the HAD-like hydrolase superfamily. CbbY/CbbZ/Gph/YieH family. The cofactor is Mg(2+).

The enzyme catalyses 2-phosphoglycolate + H2O = glycolate + phosphate. Its pathway is organic acid metabolism; glycolate biosynthesis; glycolate from 2-phosphoglycolate: step 1/1. Functionally, specifically catalyzes the dephosphorylation of 2-phosphoglycolate. Is involved in the dissimilation of the intracellular 2-phosphoglycolate formed during the DNA repair of 3'-phosphoglycolate ends, a major class of DNA lesions induced by oxidative stress. The polypeptide is Phosphoglycolate phosphatase (Haemophilus influenzae (strain ATCC 51907 / DSM 11121 / KW20 / Rd)).